Here is a 456-residue protein sequence, read N- to C-terminus: Argininosuccinate lyase (456 aa).

This sequence belongs to the lyase 1 family. Argininosuccinate lyase subfamily.

Its subcellular location is the cytoplasm. The enzyme catalyses 2-(N(omega)-L-arginino)succinate = fumarate + L-arginine. Its pathway is amino-acid biosynthesis; L-arginine biosynthesis; L-arginine from L-ornithine and carbamoyl phosphate: step 3/3. The polypeptide is Argininosuccinate lyase (Shewanella woodyi (strain ATCC 51908 / MS32)).